The primary structure comprises 113 residues: Ribosome-binding factor A (113 aa).

This sequence belongs to the RbfA family. In terms of assembly, monomer. Binds 30S ribosomal subunits, but not 50S ribosomal subunits or 70S ribosomes.

The protein resides in the cytoplasm. Functionally, one of several proteins that assist in the late maturation steps of the functional core of the 30S ribosomal subunit. Associates with free 30S ribosomal subunits (but not with 30S subunits that are part of 70S ribosomes or polysomes). Required for efficient processing of 16S rRNA. May interact with the 5'-terminal helix region of 16S rRNA. The protein is Ribosome-binding factor A of Lactococcus lactis subsp. cremoris (Streptococcus cremoris).